Consider the following 74-residue polypeptide: Large ribosomal subunit protein bL31 (74 aa).

Residues Cys16, Cys18, Cys38, and Cys41 each coordinate Zn(2+).

This sequence belongs to the bacterial ribosomal protein bL31 family. Type A subfamily. Part of the 50S ribosomal subunit. Zn(2+) is required as a cofactor.

Binds the 23S rRNA. This chain is Large ribosomal subunit protein bL31, found in Mycobacteroides abscessus (strain ATCC 19977 / DSM 44196 / CCUG 20993 / CIP 104536 / JCM 13569 / NCTC 13031 / TMC 1543 / L948) (Mycobacterium abscessus).